Reading from the N-terminus, the 405-residue chain is MKKKVLTFPSEKIGFSSDNEEFDLVMARGDYLAKNKSQKYMIIDMLGTGTFGQVVRCVGSDGEEVAIKVVKNQPKYYNYEMNEVRILHKLLYNNLNDRFVTIKDVFMYKQHLCIVEELLGRNLYTFLKMTRFKGLDHPTLRTILHQILEGMVQLSLLGIIHCDLKPENILIADYDTFKIKIIDFGSAVTSPQGSHFYVQSRYYRAPEVILGIPYGSSCDIWSLGCIGYELYVGHPLFPGKDNMDQIGRIHGLFGSLPMFMLEHGKNSSTFFEKENGYRFMGPPSNFTLEDMKKMIRSKGNSKEDDNMLIKFLLRALQPSHLIRPDAKSLASHSYLKVRDTSAEADKACNDRSGVQQNIFPANKNMRHMSTTGVILPSKKQKPTDDRRKISVYGISYENNLNRDSE.

The Protein kinase domain maps to 40–335; sequence YMIIDMLGTG…AKSLASHSYL (296 aa). Residues 46–54 and K68 contribute to the ATP site; that span reads LGTGTFGQV. Catalysis depends on D163, which acts as the Proton acceptor.

It belongs to the protein kinase superfamily. CMGC Ser/Thr protein kinase family. MNB/DYRK subfamily.

The protein localises to the cytoplasm. The protein resides in the nucleus. It catalyses the reaction L-seryl-[protein] + ATP = O-phospho-L-seryl-[protein] + ADP + H(+). It carries out the reaction L-threonyl-[protein] + ATP = O-phospho-L-threonyl-[protein] + ADP + H(+). The catalysed reaction is L-tyrosyl-[protein] + ATP = O-phospho-L-tyrosyl-[protein] + ADP + H(+). Its function is as follows. Negative regulator of the cell cycle acting downstream of the cAMP-dependent protein kinase. Part of a glucose-sensing system involved in growth control in response to glucose availability. In Encephalitozoon cuniculi (strain GB-M1) (Microsporidian parasite), this protein is Probable dual specificity protein kinase YAK1 homolog (YAK1).